The sequence spans 311 residues: 4-hydroxy-tetrahydrodipicolinate synthase (311 aa).

Pyruvate is bound at residue Thr-49. Tyr-138 (proton donor/acceptor) is an active-site residue. Lys-166 serves as the catalytic Schiff-base intermediate with substrate. Residue Val-207 participates in pyruvate binding.

The protein belongs to the DapA family. As to quaternary structure, homotetramer; dimer of dimers.

The protein resides in the cytoplasm. It catalyses the reaction L-aspartate 4-semialdehyde + pyruvate = (2S,4S)-4-hydroxy-2,3,4,5-tetrahydrodipicolinate + H2O + H(+). It participates in amino-acid biosynthesis; L-lysine biosynthesis via DAP pathway; (S)-tetrahydrodipicolinate from L-aspartate: step 3/4. Catalyzes the condensation of (S)-aspartate-beta-semialdehyde [(S)-ASA] and pyruvate to 4-hydroxy-tetrahydrodipicolinate (HTPA). The chain is 4-hydroxy-tetrahydrodipicolinate synthase from Lactobacillus helveticus (strain DPC 4571).